The following is a 299-amino-acid chain: Protein charybde (299 aa).

The segment at 73-103 (LNTRPSATPPSAGGGGPLAGGGSVGMTTPKQ) is disordered. Over residues 84–96 (AGGGGPLAGGGSV) the composition is skewed to gly residues.

It belongs to the DDIT4 family.

The protein resides in the cytoplasm. Inhibits cell growth by regulating the Tor pathway upstream of the Tsc1-Tsc2 complex and downstream of Akt1. Acts as a cell death activator during head development. The protein is Protein charybde (chrb) of Drosophila melanogaster (Fruit fly).